The sequence spans 169 residues: Gastrula zinc finger protein XlCGF62.1 (169 aa).

6 consecutive C2H2-type zinc fingers follow at residues 6–28 (FICT…IRTH), 34–56 (FICT…YKTH), 62–84 (FICT…HRSH), 90–113 (FTCT…QAIH), 119–141 (FICT…KRTH), and 147–169 (FVCT…KRTH).

The protein belongs to the krueppel C2H2-type zinc-finger protein family.

The protein resides in the nucleus. May be involved in transcriptional regulation. The sequence is that of Gastrula zinc finger protein XlCGF62.1 from Xenopus laevis (African clawed frog).